A 232-amino-acid polypeptide reads, in one-letter code: Lipoprotein-releasing system ATP-binding protein LolD (232 aa).

One can recognise an ABC transporter domain in the interval 11 to 231 (VYLHDIKREY…SLENGHVVEL (221 aa)). 47-54 (APSGSGKS) lines the ATP pocket.

This sequence belongs to the ABC transporter superfamily. Lipoprotein translocase (TC 3.A.1.125) family. As to quaternary structure, the complex is composed of two ATP-binding proteins (LolD) and two transmembrane proteins (LolC and LolE).

Its subcellular location is the cell inner membrane. Functionally, part of the ABC transporter complex LolCDE involved in the translocation of mature outer membrane-directed lipoproteins, from the inner membrane to the periplasmic chaperone, LolA. Responsible for the formation of the LolA-lipoprotein complex in an ATP-dependent manner. This Nitrobacter winogradskyi (strain ATCC 25391 / DSM 10237 / CIP 104748 / NCIMB 11846 / Nb-255) protein is Lipoprotein-releasing system ATP-binding protein LolD.